Reading from the N-terminus, the 525-residue chain is Peptide chain release factor 3 (525 aa).

In terms of domain architecture, tr-type G spans alanine 8–glutamine 276. GTP is bound by residues serine 17–threonine 24, aspartate 85–histidine 89, and asparagine 139–aspartate 142.

This sequence belongs to the TRAFAC class translation factor GTPase superfamily. Classic translation factor GTPase family. PrfC subfamily.

The protein resides in the cytoplasm. In terms of biological role, increases the formation of ribosomal termination complexes and stimulates activities of RF-1 and RF-2. It binds guanine nucleotides and has strong preference for UGA stop codons. It may interact directly with the ribosome. The stimulation of RF-1 and RF-2 is significantly reduced by GTP and GDP, but not by GMP. In Coxiella burnetii (strain RSA 331 / Henzerling II), this protein is Peptide chain release factor 3.